The primary structure comprises 130 residues: MRLATVIVLCSLFLGVSGDGWYSFFREAVQGTWDLWRAYRDNLEANYQNADQYFYARGNYEAQQRGSGGIWAAKIISTSRKYFQGLLNRYYFGIRNHGLETLQATQKAEEWGRSGKNPNHFRPEGLPEKF.

The signal sequence occupies residues 1 to 18 (MRLATVIVLCSLFLGVSG). The segment at 109-130 (EEWGRSGKNPNHFRPEGLPEKF) is disordered. Over residues 121-130 (FRPEGLPEKF) the composition is skewed to basic and acidic residues.

Belongs to the SAA family. Apolipoprotein of the HDL complex. In terms of tissue distribution, expressed by the liver; secreted in plasma.

The protein resides in the secreted. Functionally, major acute phase reactant. The chain is Serum amyloid A-4 protein from Mus musculus (Mouse).